A 248-amino-acid polypeptide reads, in one-letter code: Triosephosphate isomerase (248 aa).

Residue Asn-9–Lys-11 participates in substrate binding. Catalysis depends on His-94, which acts as the Electrophile. Glu-166 (proton acceptor) is an active-site residue. Substrate-binding positions include Gly-172, Ser-211, and Gly-232–Gly-233.

The protein belongs to the triosephosphate isomerase family. In terms of assembly, homodimer.

Its subcellular location is the cytoplasm. It carries out the reaction D-glyceraldehyde 3-phosphate = dihydroxyacetone phosphate. Its pathway is carbohydrate biosynthesis; gluconeogenesis. It participates in carbohydrate degradation; glycolysis; D-glyceraldehyde 3-phosphate from glycerone phosphate: step 1/1. Involved in the gluconeogenesis. Catalyzes stereospecifically the conversion of dihydroxyacetone phosphate (DHAP) to D-glyceraldehyde-3-phosphate (G3P). The chain is Triosephosphate isomerase from Ruthia magnifica subsp. Calyptogena magnifica.